We begin with the raw amino-acid sequence, 342 residues long: Aquaporin-8 (342 aa).

Helical transmembrane passes span 55–75, 98–118, and 126–146; these read FLAV…AIFT, VAGG…FAVL, and CIFY…TMFA. Positions 108–110 match the NPA 1 motif; that stretch reads NPA. N-linked (GlcNAc...) asparagine glycosylation occurs at Asn166. Helical transmembrane passes span 184 to 204 and 215 to 235; these read TAFA…LAMC and FLPI…SYNA. The NPA 2 signature appears at 240–242; that stretch reads NPS. The chain crosses the membrane as a helical span at residues 266–286; the sequence is YTWFFVPVLGSHCGAIIGGAI. Residues 302–327 are compositionally biased toward polar residues; it reads TNSVSSMSYNEDNSTLTKRKQVSNIV. The segment at 302-342 is disordered; the sequence is TNSVSSMSYNEDNSTLTKRKQVSNIVHDSKGAKGSSTAPVN. N-linked (GlcNAc...) asparagine glycosylation occurs at Asn314.

It belongs to the MIP/aquaporin (TC 1.A.8) family.

The protein localises to the cell membrane. Functionally, aquaglyceroporin that may modulate the water content and osmolytes during anhydrobiosis. The sequence is that of Aquaporin-8 from Milnesium tardigradum (Water bear).